A 275-amino-acid polypeptide reads, in one-letter code: Formamidopyrimidine-DNA glycosylase (275 aa).

The active-site Schiff-base intermediate with DNA is the proline 2. The active-site Proton donor is glutamate 3. The Proton donor; for beta-elimination activity role is filled by lysine 58. Histidine 91 and arginine 110 together coordinate DNA. An FPG-type zinc finger spans residues 238–272; sequence QVYGQTGKSCPRCGQAIVKLKVGGRGTHICPKCQK. Arginine 262 serves as the catalytic Proton donor; for delta-elimination activity.

The protein belongs to the FPG family. In terms of assembly, monomer. It depends on Zn(2+) as a cofactor.

The enzyme catalyses Hydrolysis of DNA containing ring-opened 7-methylguanine residues, releasing 2,6-diamino-4-hydroxy-5-(N-methyl)formamidopyrimidine.. It carries out the reaction 2'-deoxyribonucleotide-(2'-deoxyribose 5'-phosphate)-2'-deoxyribonucleotide-DNA = a 3'-end 2'-deoxyribonucleotide-(2,3-dehydro-2,3-deoxyribose 5'-phosphate)-DNA + a 5'-end 5'-phospho-2'-deoxyribonucleoside-DNA + H(+). Functionally, involved in base excision repair of DNA damaged by oxidation or by mutagenic agents. Acts as a DNA glycosylase that recognizes and removes damaged bases. Has a preference for oxidized purines, such as 7,8-dihydro-8-oxoguanine (8-oxoG). Has AP (apurinic/apyrimidinic) lyase activity and introduces nicks in the DNA strand. Cleaves the DNA backbone by beta-delta elimination to generate a single-strand break at the site of the removed base with both 3'- and 5'-phosphates. This chain is Formamidopyrimidine-DNA glycosylase, found in Streptococcus pyogenes serotype M3 (strain ATCC BAA-595 / MGAS315).